A 206-amino-acid polypeptide reads, in one-letter code: Sclerostin domain-containing protein 1 (206 aa).

A signal peptide spans 1–23 (MLPPAIHFYLLPLACILMKSCLA). N-linked (GlcNAc...) asparagine glycosylation occurs at Asn47. Cystine bridges form between Cys75–Cys133, Cys89–Cys147, Cys100–Cys163, and Cys104–Cys165. Positions 75 to 170 (CRELRSTKYI…TACKCKRYTR (96 aa)) constitute a CTCK domain. Residue Asn173 is glycosylated (N-linked (GlcNAc...) asparagine). Residues 174-206 (ESSHNFESMSPAKPVQHHRERKRASKSSKHSMS) form a disordered region. Residues 188-206 (VQHHRERKRASKSSKHSMS) are compositionally biased toward basic residues.

Belongs to the sclerostin family. Interacts with BMP2, BMP4, BMP6 and BMP7 with high affinity. In terms of tissue distribution, highly expressed in kidney and weakly in lung.

It is found in the secreted. Functionally, may be involved in the onset of endometrial receptivity for implantation/sensitization for the decidual cell reaction Enhances Wnt signaling and inhibits TGF-beta signaling. Directly antagonizes activity of BMP2, BMP4, BMP6 and BMP7 in a dose-dependent manner. This Homo sapiens (Human) protein is Sclerostin domain-containing protein 1 (SOSTDC1).